The following is a 38-amino-acid chain: Photosystem II reaction center protein L (38 aa).

Residues serine 17–phenylalanine 37 form a helical membrane-spanning segment.

Belongs to the PsbL family. In terms of assembly, PSII is composed of 1 copy each of membrane proteins PsbA, PsbB, PsbC, PsbD, PsbE, PsbF, PsbH, PsbI, PsbJ, PsbK, PsbL, PsbM, PsbT, PsbY, PsbZ, Psb30/Ycf12, at least 3 peripheral proteins of the oxygen-evolving complex and a large number of cofactors. It forms dimeric complexes.

It is found in the plastid. It localises to the chloroplast thylakoid membrane. Functionally, one of the components of the core complex of photosystem II (PSII). PSII is a light-driven water:plastoquinone oxidoreductase that uses light energy to abstract electrons from H(2)O, generating O(2) and a proton gradient subsequently used for ATP formation. It consists of a core antenna complex that captures photons, and an electron transfer chain that converts photonic excitation into a charge separation. This subunit is found at the monomer-monomer interface and is required for correct PSII assembly and/or dimerization. The protein is Photosystem II reaction center protein L of Bigelowiella natans (Pedinomonas minutissima).